Here is a 297-residue protein sequence, read N- to C-terminus: MLITPEKLYKQRRNFLKLGAGALISSSVLASKLSALNFTSDTNPNKLEISDEELATNYVNFYEFSTDKRKAVSLAQNFNTQNWKIDISGEIEKPLTLSMEDILKFPLEERIYRFRCVETWSMVVPWVGFELRRLIEMAKPTSEAKFVKFTTLLDKSQFPDQDALFPTIDYPYVEGLRMDEAMHPLTLLAVGMYKKALKPQNGAPIRLVVPWKYGFKSIKSIVKIEFTKEQPKSTWESYAPSEYGFYANVNPNVSHPRWSQANERALGDFFTKPTLMFNGYEKEVASLYKNMDLKVNF.

The tat-type signal signal peptide spans 1-35; that stretch reads MLITPEKLYKQRRNFLKLGAGALISSSVLASKLSA. Residues 62-63, Cys116, Thr151, Asn201, Arg206, and 217-219 each bind Mo-molybdopterin; these read YE and SIK.

This sequence belongs to the MsrP family. In terms of assembly, heterodimer of a catalytic subunit (MsrP) and a heme-binding subunit (MsrQ). Mo-molybdopterin serves as cofactor. Post-translationally, predicted to be exported by the Tat system. The position of the signal peptide cleavage has not been experimentally proven.

The protein localises to the periplasm. The enzyme catalyses L-methionyl-[protein] + a quinone + H2O = L-methionyl-(S)-S-oxide-[protein] + a quinol. It carries out the reaction L-methionyl-[protein] + a quinone + H2O = L-methionyl-(R)-S-oxide-[protein] + a quinol. Part of the MsrPQ system that repairs oxidized periplasmic proteins containing methionine sulfoxide residues (Met-O), using respiratory chain electrons. Thus protects these proteins from oxidative-stress damage caused by reactive species of oxygen and chlorine generated by the host defense mechanisms. MsrPQ is essential for the maintenance of envelope integrity under bleach stress, rescuing a wide series of structurally unrelated periplasmic proteins from methionine oxidation. The catalytic subunit MsrP is non-stereospecific, being able to reduce both (R-) and (S-) diastereoisomers of methionine sulfoxide. The chain is Protein-methionine-sulfoxide reductase catalytic subunit MsrP from Campylobacter jejuni subsp. jejuni serotype O:2 (strain ATCC 700819 / NCTC 11168).